A 96-amino-acid chain; its full sequence is C-C motif chemokine 20 (96 aa).

A signal peptide spans 1 to 26 (MACKHLPFLALAGVLLAYLCSQSEAA). Cystine bridges form between C31/C58 and C32/C74.

This sequence belongs to the intercrine beta (chemokine CC) family. Low levels in thymus and lung.

The protein localises to the secreted. In terms of biological role, acts as a ligand for C-C chemokine receptor CCR6. Signals through binding and activation of CCR6 and induces a strong chemotactic response and mobilization of intracellular calcium ions. The ligand-receptor pair CCL20-CCR6 is responsible for the chemotaxis of dendritic cells (DC), effector/memory T-cells and B-cells and plays an important role at skin and mucosal surfaces under homeostatic and inflammatory conditions, as well as in pathology, including cancer and autoimmune diseases. CCL20 acts as a chemotactic factor that attracts lymphocytes and, slightly, neutrophils, but not monocytes. Involved in the recruitment of both the pro-inflammatory IL17 producing helper T-cells (Th17) and the regulatory T-cells (Treg) to sites of inflammation. Required for optimal migration of thymic natural regulatory T cells (nTregs) and DN1 early thymocyte progenitor cells. Positively regulates sperm motility and chemotaxis via its binding to CCR6 which triggers Ca2+ mobilization in the sperm which is important for its motility. May be involved in formation and function of the mucosal lymphoid tissues by attracting lymphocytes and dendritic cells towards epithelial cells. The chain is C-C motif chemokine 20 (Ccl20) from Rattus norvegicus (Rat).